We begin with the raw amino-acid sequence, 356 residues long: MPLALQRSTLEEFFKRTWARRGLAAWLLRPLSAVFGVLSALRRLCYRFGIAKAQRMRVPVIVVGNIFVGGTGKTPLTIWLAQTLRQAGFHPGVISRGYGASSDVPRAVTPDAQAREVGDEPLLIAHRTQCPVMVGRDRVAVAQALLAAHPQVDVIISDDGLQHYRLARDIEIMLFDGRGNGNGWLLPAGPLREPVSRRRDFTVINGSPEETAMPPDVIQMHLSGVMAEPLAATNLPLEDVPSRALRSFSAASTGFSPARILAAAGIGNPERFFAQLRAAGLQFDEMPLPDHYDFVDNPFAAVNADVILITEKDAVKCRQNDALRNDPRVWVVPVTAHLDDAFAEQIVEKLRGHSIA.

ATP is bound at residue 67–74 (FVGGTGKT).

It belongs to the LpxK family.

The enzyme catalyses a lipid A disaccharide + ATP = a lipid IVA + ADP + H(+). It participates in glycolipid biosynthesis; lipid IV(A) biosynthesis; lipid IV(A) from (3R)-3-hydroxytetradecanoyl-[acyl-carrier-protein] and UDP-N-acetyl-alpha-D-glucosamine: step 6/6. In terms of biological role, transfers the gamma-phosphate of ATP to the 4'-position of a tetraacyldisaccharide 1-phosphate intermediate (termed DS-1-P) to form tetraacyldisaccharide 1,4'-bis-phosphate (lipid IVA). This Herminiimonas arsenicoxydans protein is Tetraacyldisaccharide 4'-kinase.